Reading from the N-terminus, the 489-residue chain is EGF-like domain-containing protein 2 (489 aa).

Positions 1 to 23 (MMQTLLRGLCVVVLFWGYIKASA) are cleaved as a signal peptide. The region spanning 73–109 (PATLCDPPCLNGGQCFEPTADTYMCMCSEAFYGSQCE) is the EGF-like domain. 3 disulfide bridges follow: Cys-77-Cys-87, Cys-81-Cys-97, and Cys-99-Cys-108. Positions 116-370 (ECSGDQITIN…GSCPTPAPPA (255 aa)) constitute a ZP domain. The N-linked (GlcNAc...) asparagine glycan is linked to Asn-229. 2 disordered regions span residues 358 to 389 (CEPG…AASD) and 404 to 425 (RSNE…QNAD). Over residues 363 to 374 (CPTPAPPAPVQP) the composition is skewed to pro residues. Over residues 404–420 (RSNEKLRLPHNKSDKKS) the composition is skewed to basic and acidic residues. N-linked (GlcNAc...) asparagine glycosylation is found at Asn-414 and Asn-479.

Component of the acid-insoluble organic matrix of calcified layers of the shell (at protein level).

Its subcellular location is the secreted. The protein is EGF-like domain-containing protein 2 of Lottia gigantea (Giant owl limpet).